A 310-amino-acid polypeptide reads, in one-letter code: Olfactory receptor 5P1 (310 aa).

The Extracellular portion of the chain corresponds to 1-25 (MEPGNHTAVTKFILLGLTDDPTLCV). Asparagine 5 carries N-linked (GlcNAc...) asparagine glycosylation. A helical membrane pass occupies residues 26 to 46 (IFFVFFLGIYIVTLVGNISII). At 47–54 (NLVRSCPQ) the chain is on the cytoplasmic side. A helical transmembrane segment spans residues 55-75 (LQTPMYMFLSHLAFVDIGYST). Residues 76–99 (SVTPIMLIGFIVHETGLPVHACEA) are Extracellular-facing. A disulfide bridge connects residues cysteine 97 and cysteine 189. A helical transmembrane segment spans residues 100 to 120 (QLCSVVTFGTAECFLLAAMAY). At 121–133 (DRYVAICSPLLYS) the chain is on the cytoplasmic side. The chain crosses the membrane as a helical span at residues 134–154 (THMSSQICLLLVGASYVGGCV). Residues 155 to 196 (NAWTFTGCLLSLSFCGPNKIDHFFCDFSPLLKLSCSDVSIIG) lie on the Extracellular side of the membrane. Residues 197 to 217 (IIPSISAGSIIVVTVFVISVS) traverse the membrane as a helical segment. The Cytoplasmic segment spans residues 218–237 (YIYILITILKMRSTEGRHKA). A helical transmembrane segment spans residues 238 to 258 (FSTCTSHLTAVTLYYGTITFI). Over 259–271 (YVMPKSSYSTKQN) the chain is Extracellular. Residues 272-292 (RVVSLFYTVVIPMLNPLIYSL) form a helical membrane-spanning segment. Residues 293-310 (RNRDVKEALRKATLRIYS) lie on the Cytoplasmic side of the membrane.

This sequence belongs to the G-protein coupled receptor 1 family.

The protein resides in the cell membrane. Potential odorant receptor. The sequence is that of Olfactory receptor 5P1 from Mus musculus (Mouse).